Reading from the N-terminus, the 1071-residue chain is DNA-directed RNA polymerase subunit beta (1071 aa).

Belongs to the RNA polymerase beta chain family. In terms of assembly, in plastids the minimal PEP RNA polymerase catalytic core is composed of four subunits: alpha, beta, beta', and beta''. When a (nuclear-encoded) sigma factor is associated with the core the holoenzyme is formed, which can initiate transcription.

It localises to the plastid. Its subcellular location is the chloroplast. It carries out the reaction RNA(n) + a ribonucleoside 5'-triphosphate = RNA(n+1) + diphosphate. In terms of biological role, DNA-dependent RNA polymerase catalyzes the transcription of DNA into RNA using the four ribonucleoside triphosphates as substrates. The polypeptide is DNA-directed RNA polymerase subunit beta (Adiantum capillus-veneris (Maidenhair fern)).